The primary structure comprises 116 residues: Large ribosomal subunit protein bL19 (116 aa).

It belongs to the bacterial ribosomal protein bL19 family.

Its function is as follows. This protein is located at the 30S-50S ribosomal subunit interface and may play a role in the structure and function of the aminoacyl-tRNA binding site. In Actinobacillus pleuropneumoniae serotype 5b (strain L20), this protein is Large ribosomal subunit protein bL19.